The sequence spans 257 residues: Beta-fibrinogenase mucrofibrase-1 (257 aa).

Residues 1-18 form the signal peptide; that stretch reads MVLIRVLANLLILQLSYA. The propeptide occupies 19-24; that stretch reads QKSSEL. The Peptidase S1 domain maps to 25-248; that stretch reads VIGGDECNIN…HLDWIKGIIA (224 aa). 6 cysteine pairs are disulfide-bonded: Cys-31-Cys-162, Cys-49-Cys-65, Cys-97-Cys-255, Cys-141-Cys-209, Cys-173-Cys-188, and Cys-199-Cys-224. Residues His-64 and Asp-109 each act as charge relay system in the active site. Ser-203 serves as the catalytic Charge relay system.

This sequence belongs to the peptidase S1 family. Snake venom subfamily. Monomer. As to expression, expressed by the venom gland.

It is found in the secreted. Its function is as follows. Snake venom serine protease with strong beta-fibrinogenolytic activities, angiotensin I (AGT)-degrading activities and strong kallikrein-like activities in vitro, releasing bradykinin from kininogen (KNG1). Intravenous injection strongly lowers blood pressure in experimental rats, which may be explained by the action on angiotensin I and kininogen. This Protobothrops mucrosquamatus (Taiwan habu) protein is Beta-fibrinogenase mucrofibrase-1.